Here is a 552-residue protein sequence, read N- to C-terminus: Hyaluronan synthase 2 (552 aa).

Over 1–11 the chain is Cytoplasmic; it reads MHCERFLCILR. A helical membrane pass occupies residues 12–32; it reads IIGTTLFGVSLLLGITAAYIV. At 33 to 45 the chain is on the extracellular side; sequence GYQFIQTDNYYFS. A helical transmembrane segment spans residues 46–66; that stretch reads FGLYGAFLASHLIIQSLFAFL. Residues 67–374 are Cytoplasmic-facing; it reads EHRKMKKSLE…NAMWFHKHHL (308 aa). Thr-110 is subject to Phosphothreonine. Lys-190 is covalently cross-linked (Glycyl lysine isopeptide (Lys-Gly) (interchain with G-Cter in ubiquitin)). An O-linked (GlcNAc) serine glycan is attached at Ser-221. Residue Thr-328 is modified to Phosphothreonine. The chain crosses the membrane as a helical span at residues 375–395; the sequence is WMTYEAIITGFFPFFLIATVI. Topologically, residues 396–402 are extracellular; sequence QLFYRGK. The chain crosses the membrane as a helical span at residues 403–423; sequence IWNILLFLLTVQLVGLIKSSF. Over 424 to 429 the chain is Cytoplasmic; it reads ASCLRG. The helical transmembrane segment at 430-450 threads the bilayer; that stretch reads NIVMVFMSLYSVLYMSSLLPA. The Extracellular portion of the chain corresponds to 451–475; sequence KMFAIATINKAGWGTSGRKTIVVNF. A helical membrane pass occupies residues 476–496; sequence IGLIPVSVWFTILLGGVIFTI. Residues 497-510 lie on the Cytoplasmic side of the membrane; it reads YKESKRPFSESKQT. A helical membrane pass occupies residues 511–531; it reads VLIVGTLLYACYWVMLLTLYV. Over 532–552 the chain is Extracellular; it reads VLINKCGRRKKGQQYDMVLDV.

Belongs to the NodC/HAS family. As to quaternary structure, homodimer; dimerization promotes enzymatic activity. Forms heterodimer with HAS3. Forms heterodimer with HAS1. Mg(2+) serves as cofactor. Phosphorylation at Thr-328 is essential for hyaluronan synthase activity. Phosphorylation at Thr-110 is required for transport from ER to Golgi. In terms of processing, O-GlcNAcylation at Ser-221 increases the stability of HAS2 and plasma membrane localization. Post-translationally, ubiquitination at Lys-190; this ubiquitination is essential for hyaluronan synthase activity and homo- or hetero-oligomerization. Can also be poly-ubiquitinated. Deubiquitinated by USP17 and USP4. USP17 efficiently removes 'Lys-63'- and 'Lys-48'-linked polyubiquitin chains, whereas USP4 preferentially removes monoubiquitination and, partially, both 'Lys-63'- and 'Lys-48'-linked polyubiquitin chain. Expressed in fibroblasts.

It localises to the cell membrane. Its subcellular location is the endoplasmic reticulum membrane. The protein resides in the vesicle. The protein localises to the golgi apparatus membrane. It is found in the lysosome. It carries out the reaction [hyaluronan](n) + UDP-N-acetyl-alpha-D-glucosamine = N-acetyl-beta-D-glucosaminyl-(1-&gt;4)-[hyaluronan](n) + UDP + H(+). It catalyses the reaction N-acetyl-beta-D-glucosaminyl-(1-&gt;4)-[hyaluronan](n) + UDP-alpha-D-glucuronate = [hyaluronan](n+1) + UDP + H(+). Its pathway is glycan biosynthesis; hyaluronan biosynthesis. With respect to regulation, regulated by several post-translational modifications such as ubiquitination/deubiquitination, phosphorylation and O-GlcNAcylation. The enzymatic activity depends on the availability of UDP-GlcUA and UDP-GlcNAc. Functionally, catalyzes the addition of GlcNAc or GlcUA monosaccharides to the nascent hyaluronan polymer. Therefore, it is essential to hyaluronan synthesis a major component of most extracellular matrices that has a structural role in tissues architectures and regulates cell adhesion, migration and differentiation. This is one of three isoenzymes responsible for cellular hyaluronan synthesis and it is particularly responsible for the synthesis of high molecular mass hyaluronan. The polypeptide is Hyaluronan synthase 2 (Homo sapiens (Human)).